Reading from the N-terminus, the 306-residue chain is Ornithine carbamoyltransferase (306 aa).

Residues 53 to 56 (STRT), glutamine 80, arginine 104, and 131 to 134 (HPCQ) each bind carbamoyl phosphate. L-ornithine is bound by residues asparagine 162, aspartate 220, and 224–225 (SM). Residues 260–261 (CL) and arginine 288 each bind carbamoyl phosphate.

This sequence belongs to the aspartate/ornithine carbamoyltransferase superfamily. OTCase family.

The protein resides in the cytoplasm. It carries out the reaction carbamoyl phosphate + L-ornithine = L-citrulline + phosphate + H(+). It functions in the pathway amino-acid biosynthesis; L-arginine biosynthesis; L-arginine from L-ornithine and carbamoyl phosphate: step 1/3. Reversibly catalyzes the transfer of the carbamoyl group from carbamoyl phosphate (CP) to the N(epsilon) atom of ornithine (ORN) to produce L-citrulline. The chain is Ornithine carbamoyltransferase from Dechloromonas aromatica (strain RCB).